A 179-amino-acid polypeptide reads, in one-letter code: M-zodatoxin-Lt4b (179 aa).

The signal sequence occupies residues Met-1–Ser-22. The propeptide occupies Glu-23–Arg-43. A Processing quadruplet motif 1 motif is present at residues Glu-40–Arg-43. At Gln-61 the chain carries Glutamine amide. The Inverted processing quadruplet motif 1 signature appears at Arg-63–Ser-66. A propeptide spanning residues Arg-63–Arg-71 is cleaved from the precursor. The short motif at Asp-68–Arg-71 is the Processing quadruplet motif 2 element. Gln-89 carries the post-translational modification Glutamine amide. An Inverted processing quadruplet motif 2 motif is present at residues Arg-91–Thr-94. The propeptide occupies Arg-91–Arg-99. The short motif at Glu-96–Arg-99 is the Processing quadruplet motif 3 element. Gln-117 is modified (glutamine amide). The Inverted processing quadruplet motif 3 signature appears at Arg-119–Ser-122. A propeptide spanning residues Arg-119–Arg-127 is cleaved from the precursor. The short motif at Glu-124–Arg-127 is the Processing quadruplet motif 4 element. Gln-145 bears the Glutamine amide mark. The Inverted processing quadruplet motif 4 motif lies at Arg-147–Thr-150. The propeptide occupies Arg-147–Arg-154. A Processing quadruplet motif 5 motif is present at residues Glu-151 to Arg-154. Phe-178 is subject to Phenylalanine amide.

It belongs to the cationic peptide 03 (latarcin) family. 04 subfamily. Cleavage of the propeptide depends on the processing quadruplet motif (PQM) (XXXR, with at least one of X being E) and the inverted PQM (RXXX, with at least one of X being E). Expressed by the venom gland.

The protein resides in the secreted. Its function is as follows. M-zodatoxin-Lt4b: Has antimicrobial activity against Gram-positive bacteria (A.globiformis VKM Ac-1112 (MIC=0.3 uM), and B.subtilis VKM B-501 (MIC=1.1 uM)), Gram-negative bacteria (E.coli DH5-alpha (MIC=4.4 uM), E.coli MH1 (MIC=4.4 uM), and P.aeruginosa PAO1 (MIC=&gt;35 uM)), and yeasts (P.pastoris GS115 (MIC=&gt;35 uM), and S.cerevisiae Y190 (MIC=35 uM)). Does not have hemolytic activity against rabbit erythrocytes. Causes paralysis, but is not lethal when injected into insect (M.domestica) larvae. Shows no antimicrobial activity against Gram-positive bacterium B.subtilis B-501 or Gram-negative bacterium E.coli DH5-alpha at concentration up to 20 uM. This chain is M-zodatoxin-Lt4b, found in Lachesana tarabaevi (Spider).